The following is a 565-amino-acid chain: MDDSSINKELKQKLNFSYCEEESESEGQEAWETRDAHSQIPDRAEGQESEAKFTPPGPPLSSVHEVGTFQEKTKKSPEQVLMTPVSGFRNYPETPAQPDSRSKLLDCESPFTPKGLLSQSVISSTEKIPSRGSKHLRFTPVPFVDEMTSSALVNINPFTPESYRKQFLKSNGKRKTRGDFEEAGPGEGNVEQGLPAKRCVLQETNMASRYEKEFLEVEKIGVGEFGTVYKCIKRLDGCVYAIKRSTKPFAGLSNENLALHEVYAHAVLGHHPHVVRYYSAWAEDDHMIIQNEYCNGGSLQTAISENTKSGNHFQEPKLKDILLQISLGLKYIHSSGMVHLDIKPSNIFICHKMQSDSPVVPEEIENEADWFLSANVMYKIGDLGHVTSISKPKVEEGDSRFLANEILQEDYQHLPKADIFALGLTIAVAAGAESLPTNGAAWHHIREGKLPDIPQKLSEEFYNLLKNMIHPDPRERPSAAALARSRVLRPSLGKAEELQQQLNLEKFKTATLERELREAQQAWFSQEERGDAGVSGTPTGSRSTKRLVGGKSAKSSSFTWGKSSP.

2 disordered regions span residues 18–78 (YCEE…KSPE) and 169–191 (KSNG…GNVE). A compositionally biased stretch (acidic residues) spans 19 to 29 (CEEESESEGQE). Over residues 31-51 (WETRDAHSQIPDRAEGQESEA) the composition is skewed to basic and acidic residues. At serine 76 the chain carries Phosphoserine. Residues 173–175 (KRK) carry the Nuclear localization signal motif. The Protein kinase domain maps to 214–492 (FLEVEKIGVG…ARSRVLRPSL (279 aa)). Residues 220–228 (IGVGEFGTV) and lysine 243 contribute to the ATP site. The Nuclear export signal motif lies at 317–331 (KLKDILLQISLGLKY). Aspartate 341 acts as the Proton acceptor in catalysis. The Mg(2+) site is built by asparagine 346 and aspartate 382. The stretch at 495–521 (AEELQQQLNLEKFKTATLERELREAQQ) forms a coiled coil. The interval 521-565 (QAWFSQEERGDAGVSGTPTGSRSTKRLVGGKSAKSSSFTWGKSSP) is disordered. Over residues 553-565 (AKSSSFTWGKSSP) the composition is skewed to polar residues.

Belongs to the protein kinase superfamily. Ser/Thr protein kinase family. WEE1 subfamily. Phosphorylation leads to increase its activity.

Its subcellular location is the nucleus. The catalysed reaction is L-tyrosyl-[protein] + ATP = O-phospho-L-tyrosyl-[protein] + ADP + H(+). Its function is as follows. Oocyte-specific protein tyrosine kinase that phosphorylates and inhibits CDK1 and acts as a key regulator of meiosis during both prophase I and metaphase II. Required to maintain meiotic arrest in oocytes during the germinal vesicle (GV) stage, a long period of quiescence at dictyate prophase I, by phosphorylating CDK1 at 'Tyr-15', leading to inhibit CDK1 activity and prevent meiotic reentry. Also required for metaphase II exit during egg activation by phosphorylating CDK1 at 'Tyr-15', to ensure exit from meiosis in oocytes and promote pronuclear formation. The sequence is that of Wee1-like protein kinase 2 (WEE2) from Ailuropoda melanoleuca (Giant panda).